A 364-amino-acid chain; its full sequence is tRNA N6-adenosine threonylcarbamoyltransferase (364 aa).

Residues His-115 and His-119 each contribute to the Fe cation site. Substrate-binding positions include 137 to 141 (LVSGG), Asp-170, Gly-183, and Asn-288. Position 316 (Asp-316) interacts with Fe cation.

Belongs to the KAE1 / TsaD family. The cofactor is Fe(2+).

The protein resides in the cytoplasm. The enzyme catalyses L-threonylcarbamoyladenylate + adenosine(37) in tRNA = N(6)-L-threonylcarbamoyladenosine(37) in tRNA + AMP + H(+). In terms of biological role, required for the formation of a threonylcarbamoyl group on adenosine at position 37 (t(6)A37) in tRNAs that read codons beginning with adenine. Is involved in the transfer of the threonylcarbamoyl moiety of threonylcarbamoyl-AMP (TC-AMP) to the N6 group of A37, together with TsaE and TsaB. TsaD likely plays a direct catalytic role in this reaction. The polypeptide is tRNA N6-adenosine threonylcarbamoyltransferase (Bartonella tribocorum (strain CIP 105476 / IBS 506)).